A 445-amino-acid chain; its full sequence is 2-oxoisovalerate dehydrogenase subunit alpha, mitochondrial (445 aa).

Residues 1-45 (MAVAIAAARVWRLNRGLSQAALLLLRRPGARGLARSHPRRQQQQF) constitute a mitochondrion transit peptide. The interval 33–54 (LARSHPRRQQQQFSSLDDKPQF) is disordered. Thiamine diphosphate is bound by residues Tyr158 and Arg159. Ser206 contributes to the K(+) binding site. Ser207 serves as a coordination point for thiamine diphosphate. Residues Pro208, Thr211, and Gln212 each contribute to the K(+) site. Glu238 is a Mg(2+) binding site. 3 residues coordinate thiamine diphosphate: Gly239, Ala240, and Arg265. Positions 267 and 269 each coordinate Mg(2+). Position 336 (His336) interacts with thiamine diphosphate. Residue Ser337 is modified to Phosphoserine; by BCKDK. Thr338 carries the post-translational modification Phosphothreonine. Phosphoserine occurs at positions 339 and 347. Residue Lys356 is modified to N6-acetyllysine; alternate. Lys356 is subject to N6-succinyllysine; alternate. Residue Lys380 is modified to N6-succinyllysine.

It belongs to the BCKDHA family. As to quaternary structure, heterotetramer of 2 alpha/BCKDHA and 2 beta chains/BCKDHB that forms the branched-chain alpha-keto acid decarboxylase (E1) component of the BCKD complex. The branched-chain alpha-ketoacid dehydrogenase is a large complex composed of three major building blocks E1, E2 and E3. It is organized around E2, a 24-meric cubic core composed of DBT, to which are associated 6 to 12 copies of E1, and approximately 6 copies of the dehydrogenase E3, a DLD dimer. Interacts with PPM1K. It depends on thiamine diphosphate as a cofactor. Requires Mg(2+) as cofactor. Post-translationally, phosphorylated at Ser-337 by BCKDK and dephosphorylated by protein phosphatase PPM1K.

The protein localises to the mitochondrion matrix. It carries out the reaction N(6)-[(R)-lipoyl]-L-lysyl-[protein] + 3-methyl-2-oxobutanoate + H(+) = N(6)-[(R)-S(8)-2-methylpropanoyldihydrolipoyl]-L-lysyl-[protein] + CO2. In terms of biological role, together with BCKDHB forms the heterotetrameric E1 subunit of the mitochondrial branched-chain alpha-ketoacid dehydrogenase (BCKD) complex. The BCKD complex catalyzes the multi-step oxidative decarboxylation of alpha-ketoacids derived from the branched-chain amino-acids valine, leucine and isoleucine producing CO2 and acyl-CoA which is subsequently utilized to produce energy. The E1 subunit catalyzes the first step with the decarboxylation of the alpha-ketoacid forming an enzyme-product intermediate. A reductive acylation mediated by the lipoylamide cofactor of E2 extracts the acyl group from the E1 active site for the next step of the reaction. The sequence is that of 2-oxoisovalerate dehydrogenase subunit alpha, mitochondrial (BCKDHA) from Pan troglodytes (Chimpanzee).